Consider the following 148-residue polypeptide: Ribonuclease H (148 aa).

The 142-residue stretch at 1–142 folds into the RNase H type-1 domain; sequence MSDSVEIYTD…ADQLANRGVD (142 aa). The Mg(2+) site is built by D10, E48, D70, and D134. A disordered region spans residues 129-148; that stretch reads GNERADQLANRGVDEVRAQR.

The protein belongs to the RNase H family. In terms of assembly, monomer. Mg(2+) serves as cofactor.

The protein localises to the cytoplasm. The enzyme catalyses Endonucleolytic cleavage to 5'-phosphomonoester.. Endonuclease that specifically degrades the RNA of RNA-DNA hybrids. The polypeptide is Ribonuclease H (Pseudomonas entomophila (strain L48)).